Reading from the N-terminus, the 126-residue chain is Aspartate 1-decarboxylase (126 aa).

Residue serine 25 is the Schiff-base intermediate with substrate; via pyruvic acid of the active site. A Pyruvic acid (Ser) modification is found at serine 25. Residue threonine 57 participates in substrate binding. Catalysis depends on tyrosine 58, which acts as the Proton donor. Position 73–75 (73–75) interacts with substrate; the sequence is GGA.

It belongs to the PanD family. As to quaternary structure, heterooctamer of four alpha and four beta subunits. Pyruvate is required as a cofactor. Post-translationally, is synthesized initially as an inactive proenzyme, which is activated by self-cleavage at a specific serine bond to produce a beta-subunit with a hydroxyl group at its C-terminus and an alpha-subunit with a pyruvoyl group at its N-terminus.

It localises to the cytoplasm. It catalyses the reaction L-aspartate + H(+) = beta-alanine + CO2. It participates in cofactor biosynthesis; (R)-pantothenate biosynthesis; beta-alanine from L-aspartate: step 1/1. In terms of biological role, catalyzes the pyruvoyl-dependent decarboxylation of aspartate to produce beta-alanine. The chain is Aspartate 1-decarboxylase from Acinetobacter baumannii (strain AB307-0294).